The chain runs to 194 residues: MSEVAQNSPAEVQAKKVVYCGVCTLPPEYCEFGGTAKKCEEWLKDNHAELYQRLYSEEALSSNLSELSVSVRERAAKDAAKKEAKAAAAEARDAERKAAAKVQIKRVERNKRKHVTVITGLEVHGLENKKVAKELGKKFATGSSVTKSPAGVEEITVQGDVSEDVKEWLLELYGKEIPESNIELVEDKKKKTSG.

In terms of domain architecture, SUI1 spans 102 to 173; the sequence is VQIKRVERNK…DVKEWLLELY (72 aa).

The protein belongs to the DENR family. As to quaternary structure, interacts with the 40S ribosomal subunit.

It is found in the cytoplasm. This chain is Translation machinery-associated protein 22 (tma22), found in Aspergillus fumigatus (strain ATCC MYA-4609 / CBS 101355 / FGSC A1100 / Af293) (Neosartorya fumigata).